We begin with the raw amino-acid sequence, 1601 residues long: Polycomb group protein Psc (1601 aa).

2 disordered regions span residues 1–91 (MMTP…TTTT) and 165–245 (NGIK…DLAT). Low complexity-rich tracts occupy residues 8-91 (AIQP…TTTT) and 182-198 (SSSS…SSSS). Residues 199–215 (WPTTRRATSEDASSNGG) are compositionally biased toward polar residues. Residues 228–245 (TAAVAASSTATTTSDLAT) are compositionally biased toward low complexity. An RING-type zinc finger spans residues 263–302 (CHLCQGYLINATTIVECLHSFCHSCLINHLRKERFCPRCE). 7 disordered regions span residues 561–693 (KREK…FSED), 711–856 (VESP…NRTP), 895–960 (IGGG…SNNY), 1011–1097 (YKYT…EKQQ), 1116–1315 (SITI…LAPK), 1330–1408 (NPAA…HPVM), and 1512–1601 (AATG…TKSK). Low complexity predominate over residues 567–590 (SPQMSSKSSSKSSPCTPVSSPSEP). Residues 611 to 637 (DPERREIVKPLKPEKESRSKKKDKDGS) show a composition bias toward basic and acidic residues. Positions 638–649 (PKSSSSSSSSSS) are enriched in low complexity. Residues S656 and S658 each carry the phosphoserine modification. Polar residues predominate over residues 676-689 (SGVSTLSPRVTSGA). Residues 729–739 (SVQQSASPKSK) are compositionally biased toward low complexity. Positions 812-822 (LMPPPAKPPML) are enriched in pro residues. The span at 929–938 (TTPSQGNKNV) shows a compositional bias: polar residues. Over residues 1011–1022 (YKYTPKPTPNSG) the composition is skewed to low complexity. The segment covering 1036 to 1045 (LGGGNGGSLG) has biased composition (gly residues). The span at 1069–1085 (SSATQSGGNNGIVNNNI) shows a compositional bias: low complexity. Residues 1116 to 1133 (SITISRDNGDSSSPNNGQ) show a composition bias toward polar residues. S1139 is subject to Phosphoserine. A compositionally biased stretch (pro residues) spans 1204 to 1217 (PQLPKVATPPPPSS). Phosphothreonine is present on residues T1222, T1236, and T1251. Over residues 1247 to 1258 (VDKKTPSPEKRT) the composition is skewed to basic and acidic residues. A phosphoserine mark is found at S1253, S1266, and S1274. Residues 1261–1272 (QMGSHSPTASEN) are compositionally biased toward polar residues. 2 stretches are compositionally biased toward polar residues: residues 1352–1375 (QSGQ…SPPA) and 1561–1587 (APQT…NNGA).

As to quaternary structure, component of PRC1 complex, which contains many PcG proteins like Pc, ph, Scm, Psc, Sce and also chromatin-remodeling proteins such as histone deacetylases. This complex is distinct from the Esc/E(z) complex, at least composed of esc, E(z), Su(z)12, HDAC1/Rpd3 and Caf1-55. The 2 complexes however cooperate and interact together during the first 3 hours of development to establish PcG silencing.

Its subcellular location is the nucleus. Polycomb group (PcG) protein. PcG proteins act by forming multiprotein complexes, which are required to maintain the transcriptionally repressive state of homeotic genes throughout development. PcG proteins are not required to initiate repression, but to maintain it during later stages of development. Component of the PcG multiprotein PRC1 complex, a complex that acts via chromatin remodeling and modification of histones; it mediates monoubiquitination of histone H2A 'Lys-118', rendering chromatin heritably changed in its expressibility. Needed to maintain expression patterns of the homeotic selector genes of the Antennapedia (Antp-C) and Bithorax (BX-C) complexes, and hence for the maintenance of segmental determination. This is Polycomb group protein Psc (Psc) from Drosophila melanogaster (Fruit fly).